We begin with the raw amino-acid sequence, 90 residues long: Putative regulatory protein Cbei_1140 (90 aa).

The protein belongs to the RemA family.

This chain is Putative regulatory protein Cbei_1140, found in Clostridium beijerinckii (strain ATCC 51743 / NCIMB 8052) (Clostridium acetobutylicum).